A 557-amino-acid polypeptide reads, in one-letter code: Potassium-transporting ATPase potassium-binding subunit (557 aa).

12 consecutive transmembrane segments (helical) span residues 5–25 (GFLL…PLGS), 63–83 (LSAI…MLLG), 132–152 (GLTV…FALI), 170–190 (LLRI…LFFI), 253–273 (FVQM…FGEV), 283–303 (LLWA…WAEV), 329–349 (VLVS…AVIA), 356–376 (ALGG…FGGV), 379–399 (GLYG…LMIG), 416–436 (LTAL…ALAM), 484–504 (LLAF…MAIA), and 526–546 (LFVG…FIPA).

It belongs to the KdpA family. The system is composed of three essential subunits: KdpA, KdpB and KdpC.

The protein resides in the cell inner membrane. Part of the high-affinity ATP-driven potassium transport (or Kdp) system, which catalyzes the hydrolysis of ATP coupled with the electrogenic transport of potassium into the cytoplasm. This subunit binds the periplasmic potassium ions and delivers the ions to the membrane domain of KdpB through an intramembrane tunnel. The chain is Potassium-transporting ATPase potassium-binding subunit from Escherichia fergusonii (strain ATCC 35469 / DSM 13698 / CCUG 18766 / IAM 14443 / JCM 21226 / LMG 7866 / NBRC 102419 / NCTC 12128 / CDC 0568-73).